Here is a 61-residue protein sequence, read N- to C-terminus: Small ribosomal subunit protein uS14C (61 aa).

C24, C27, C40, and C43 together coordinate Zn(2+).

The protein belongs to the universal ribosomal protein uS14 family. Zinc-binding uS14 subfamily. Part of the 30S ribosomal subunit. Contacts proteins S3 and S10. It depends on Zn(2+) as a cofactor.

In terms of biological role, binds 16S rRNA, required for the assembly of 30S particles and may also be responsible for determining the conformation of the 16S rRNA at the A site. The polypeptide is Small ribosomal subunit protein uS14C (Bacillus licheniformis (strain ATCC 14580 / DSM 13 / JCM 2505 / CCUG 7422 / NBRC 12200 / NCIMB 9375 / NCTC 10341 / NRRL NRS-1264 / Gibson 46)).